Reading from the N-terminus, the 241-residue chain is RecQ-mediated genome instability protein 1 (241 aa).

The protein belongs to the RMI1 family. In terms of assembly, forms a complex with SGS1 and TOP3.

It is found in the cytoplasm. The protein resides in the nucleus. In terms of biological role, structure-specific DNA-binding protein with a preference for cruciform structures. Also binds single-stranded DNA (ssDNA). Functions together with SGS1 and TOP3 to maintain genome integrity. Essential for proper meiotic cell division. Required for normal S-phase progression and DNA damage response. Required for resistance to the DNA-damaging agent methyl methanesulfonate (MMS). The protein is RecQ-mediated genome instability protein 1 of Saccharomyces cerevisiae (strain ATCC 204508 / S288c) (Baker's yeast).